A 327-amino-acid chain; its full sequence is ATP-dependent 6-phosphofructokinase (327 aa).

Gly-12 is a binding site for ATP. ADP contacts are provided by residues 22–26 (RGVVR) and 55–60 (RYSVSD). Residues 73–74 (RF) and 103–106 (GDGS) each bind ATP. Asp-104 serves as a coordination point for Mg(2+). A substrate-binding site is contributed by 127–129 (TID). Asp-129 acts as the Proton acceptor in catalysis. Residue Arg-156 coordinates ADP. Substrate contacts are provided by residues Arg-164 and 171–173 (MGR). Residues 187–189 (GCE), Lys-213, and 215–217 (KKH) contribute to the ADP site. Residues Glu-224, Arg-245, and 251-254 (HIQR) contribute to the substrate site.

The protein belongs to the phosphofructokinase type A (PFKA) family. ATP-dependent PFK group I subfamily. Prokaryotic clade 'B1' sub-subfamily. As to quaternary structure, homotetramer. Mg(2+) serves as cofactor.

It is found in the cytoplasm. The catalysed reaction is beta-D-fructose 6-phosphate + ATP = beta-D-fructose 1,6-bisphosphate + ADP + H(+). It participates in carbohydrate degradation; glycolysis; D-glyceraldehyde 3-phosphate and glycerone phosphate from D-glucose: step 3/4. With respect to regulation, allosterically activated by ADP and other diphosphonucleosides, and allosterically inhibited by phosphoenolpyruvate. Functionally, catalyzes the phosphorylation of D-fructose 6-phosphate to fructose 1,6-bisphosphate by ATP, the first committing step of glycolysis. The chain is ATP-dependent 6-phosphofructokinase from Yersinia pseudotuberculosis serotype IB (strain PB1/+).